The primary structure comprises 120 residues: KRFTRCGLVNELRKQGFDENLMRDWVCLVENESARYTDKIANVNKNGSRDYGLFQINDKYWCSKGSTPGKDCNVTCSQLLTDDITVASTCAKKIYKRTKFDAWSGWDNHCNHSNPDISSC.

The C-type lysozyme domain maps to 1–120 (KRFTRCGLVN…NHSNPDISSC (120 aa)). 4 disulfides stabilise this stretch: cysteine 6–cysteine 120, cysteine 27–cysteine 110, cysteine 62–cysteine 76, and cysteine 72–cysteine 90. Catalysis depends on residues glutamate 32 and aspartate 50.

The protein belongs to the glycosyl hydrolase 22 family. As to quaternary structure, monomer.

The catalysed reaction is Hydrolysis of (1-&gt;4)-beta-linkages between N-acetylmuramic acid and N-acetyl-D-glucosamine residues in a peptidoglycan and between N-acetyl-D-glucosamine residues in chitodextrins.. In terms of biological role, lysozymes have primarily a bacteriolytic function; those in tissues and body fluids are associated with the monocyte-macrophage system and enhance the activity of immunoagents. In Antheraea mylitta (Tasar silkworm), this protein is Lysozyme.